The chain runs to 832 residues: Mucosa-associated lymphoid tissue lymphoma translocation protein 1 homolog (832 aa).

The segment at 1–39 is disordered; it reads MSLWGQPLQASPPLAVRQPPTASSGPSTSPPAGATLNRL. N-acetylserine is present on Ser2. Low complexity predominate over residues 19–39; that stretch reads PPTASSGPSTSPPAGATLNRL. The Death domain maps to 45-132; that stretch reads RRLSESLDRA…EVLPLLNPPG (88 aa). Ig-like C2-type domains follow at residues 131–207 and 218–314; these read PGLK…FEFS and AEVT…KKAE. A Phosphoserine modification is found at Ser141. 2 disulfides stabilise this stretch: Cys154–Cys196 and Cys257–Cys299. A caspase-like region spans residues 356-570; sequence IGNMSYWEHP…SLSEKRALTD (215 aa). Residues 377–384 carry the Nuclear export signal motif; the sequence is LTNLLRQL. Active-site residues include His423 and Cys472.

It belongs to the peptidase C14B family. As to quaternary structure, homooligomer; forms oligomers which bind to TRAF6. Forms a complex with CARD14 and MALT1; resulting in the formation of a CBM (CARD14-BCL10-MALT1) complex. Forms a complex with CARD11 and MALT1; resulting in the formation of a CBM (CARD11-BCL10-MALT1) complex. Forms a complex with CARD9 and MALT1; resulting in the formation of a CBM (CARD9-BCL10-MALT1) complex.

It localises to the cytoplasm. Its subcellular location is the perinuclear region. It is found in the nucleus. Protease that enhances BCL10-induced activation: acts via formation of CBM complexes that channel adaptive and innate immune signaling downstream of CARD domain-containing proteins (CARD9, CARD11 and CARD14) to activate NF-kappa-B and MAP kinase p38 pathways which stimulate expression of genes encoding pro-inflammatory cytokines and chemokines. Mediates BCL10 cleavage: MALT1-dependent BCL10 cleavage plays an important role in T-cell antigen receptor-induced integrin adhesion. Involved in the induction of T helper 17 cells (Th17) differentiation. Cleaves RC3H1 and ZC3H12A in response to T-cell receptor (TCR) stimulation which releases their cooperatively repressed targets to promote Th17 cell differentiation. Also mediates cleavage of N4BP1 in T-cells following TCR-mediated activation, leading to N4BP1 inactivation. May also have ubiquitin ligase activity: binds to TRAF6, inducing TRAF6 oligomerization and activation of its ligase activity. In Mus musculus (Mouse), this protein is Mucosa-associated lymphoid tissue lymphoma translocation protein 1 homolog.